Consider the following 60-residue polypeptide: Large ribosomal subunit protein bL32 (60 aa).

A disordered region spans residues 1-21 (MAVPARHTSKAKKNKRRTHYK). Positions 7–20 (HTSKAKKNKRRTHY) are enriched in basic residues.

The protein belongs to the bacterial ribosomal protein bL32 family.

This chain is Large ribosomal subunit protein bL32, found in Streptococcus equi subsp. zooepidemicus (strain H70).